Here is a 129-residue protein sequence, read N- to C-terminus: Lysozyme C (129 aa).

Residues 1-129 form the C-type lysozyme domain; it reads KVYGRCELAA…VQAWIRGCRL (129 aa). 4 disulfide bridges follow: cysteine 6–cysteine 127, cysteine 30–cysteine 115, cysteine 64–cysteine 80, and cysteine 76–cysteine 94. Active-site residues include glutamate 35 and aspartate 52.

It belongs to the glycosyl hydrolase 22 family. As to quaternary structure, monomer.

It is found in the secreted. It carries out the reaction Hydrolysis of (1-&gt;4)-beta-linkages between N-acetylmuramic acid and N-acetyl-D-glucosamine residues in a peptidoglycan and between N-acetyl-D-glucosamine residues in chitodextrins.. Its function is as follows. Lysozymes have primarily a bacteriolytic function; those in tissues and body fluids are associated with the monocyte-macrophage system and enhance the activity of immunoagents. The protein is Lysozyme C (LYZ) of Tragopan satyra (Satyr tragopan).